The following is a 444-amino-acid chain: Tol-Pal system protein TolB (444 aa).

A signal peptide spans 1–19; it reads MRNIIYFILLLLFSFKGYA.

It belongs to the TolB family. As to quaternary structure, the Tol-Pal system is composed of five core proteins: the inner membrane proteins TolA, TolQ and TolR, the periplasmic protein TolB and the outer membrane protein Pal. They form a network linking the inner and outer membranes and the peptidoglycan layer.

It localises to the periplasm. Part of the Tol-Pal system, which plays a role in outer membrane invagination during cell division and is important for maintaining outer membrane integrity. This chain is Tol-Pal system protein TolB, found in Rickettsia akari (strain Hartford).